Consider the following 260-residue polypeptide: Cytochrome c oxidase subunit 3 (260 aa).

The next 7 membrane-spanning stretches (helical) occupy residues 14-34 (PWPLTGAISALMMTSGLILWF), 41-61 (LLLAGTILLLLTVINWWRDVI), 81-101 (GMILFITSEVCFFFAFFWAFF), 126-146 (FLVPLLNTAVLLSSGVTVTWA), 158-178 (AIQGLFLTVILGIYFTGLQAW), 196-216 (FFVATGFHGLHVLIGTTFLFI), and 238-258 (AWYWHFVDVVWLFLYICICWW).

It belongs to the cytochrome c oxidase subunit 3 family. As to quaternary structure, component of the cytochrome c oxidase (complex IV, CIV), a multisubunit enzyme composed of a catalytic core of 3 subunits and several supernumerary subunits. The complex exists as a monomer or a dimer and forms supercomplexes (SCs) in the inner mitochondrial membrane with ubiquinol-cytochrome c oxidoreductase (cytochrome b-c1 complex, complex III, CIII).

Its subcellular location is the mitochondrion inner membrane. The enzyme catalyses 4 Fe(II)-[cytochrome c] + O2 + 8 H(+)(in) = 4 Fe(III)-[cytochrome c] + 2 H2O + 4 H(+)(out). Component of the cytochrome c oxidase, the last enzyme in the mitochondrial electron transport chain which drives oxidative phosphorylation. The respiratory chain contains 3 multisubunit complexes succinate dehydrogenase (complex II, CII), ubiquinol-cytochrome c oxidoreductase (cytochrome b-c1 complex, complex III, CIII) and cytochrome c oxidase (complex IV, CIV), that cooperate to transfer electrons derived from NADH and succinate to molecular oxygen, creating an electrochemical gradient over the inner membrane that drives transmembrane transport and the ATP synthase. Cytochrome c oxidase is the component of the respiratory chain that catalyzes the reduction of oxygen to water. Electrons originating from reduced cytochrome c in the intermembrane space (IMS) are transferred via the dinuclear copper A center (CU(A)) of subunit 2 and heme A of subunit 1 to the active site in subunit 1, a binuclear center (BNC) formed by heme A3 and copper B (CU(B)). The BNC reduces molecular oxygen to 2 water molecules using 4 electrons from cytochrome c in the IMS and 4 protons from the mitochondrial matrix. The sequence is that of Cytochrome c oxidase subunit 3 (COIII) from Patiria pectinifera (Starfish).